The sequence spans 511 residues: Xylose import ATP-binding protein XylG (511 aa).

ABC transporter domains follow at residues 6–244 and 261–506; these read LEMR…VGRE and FEAR…IGKP.

The protein belongs to the ABC transporter superfamily. Xylose importer (TC 3.A.1.2.4) family. As to quaternary structure, the complex is composed of two ATP-binding proteins (XylG), two transmembrane proteins (XylH) and a solute-binding protein (XylF).

The protein localises to the cell inner membrane. The enzyme catalyses D-xylose(out) + ATP + H2O = D-xylose(in) + ADP + phosphate + H(+). Its function is as follows. Part of the ABC transporter complex XylFGH involved in xylose import. Responsible for energy coupling to the transport system. The polypeptide is Xylose import ATP-binding protein XylG (Brucella melitensis biotype 1 (strain ATCC 23456 / CCUG 17765 / NCTC 10094 / 16M)).